Reading from the N-terminus, the 282-residue chain is ATP synthase subunit a (282 aa).

5 helical membrane passes run 45–65 (AIHVDTMAISIALGFLFLWLF), 106–126 (IAPLALTIFVWVFLMNFMDLI), 160–179 (INATLGMSLSVFVLIVFYSI), 232–252 (LIFILIAILPWGVQWALSVPW), and 253–273 (AIFHILIIVLQAFIFMMLTIV).

This sequence belongs to the ATPase A chain family. F-type ATPases have 2 components, CF(1) - the catalytic core - and CF(0) - the membrane proton channel. CF(1) has five subunits: alpha(3), beta(3), gamma(1), delta(1), epsilon(1). CF(0) has three main subunits: a(1), b(2) and c(9-12). The alpha and beta chains form an alternating ring which encloses part of the gamma chain. CF(1) is attached to CF(0) by a central stalk formed by the gamma and epsilon chains, while a peripheral stalk is formed by the delta and b chains.

The protein localises to the cell inner membrane. Its function is as follows. Key component of the proton channel; it plays a direct role in the translocation of protons across the membrane. This Marinomonas sp. (strain MWYL1) protein is ATP synthase subunit a.